The sequence spans 784 residues: Endonuclease MutS2 (784 aa).

335–342 (GPNTGGKT) contributes to the ATP binding site. A Smr domain is found at 709-784 (LDLRGERYED…GTGVTIVELK (76 aa)).

It belongs to the DNA mismatch repair MutS family. MutS2 subfamily. Homodimer. Binds to stalled ribosomes, contacting rRNA.

Functionally, endonuclease that is involved in the suppression of homologous recombination and thus may have a key role in the control of bacterial genetic diversity. Acts as a ribosome collision sensor, splitting the ribosome into its 2 subunits. Detects stalled/collided 70S ribosomes which it binds and splits by an ATP-hydrolysis driven conformational change. Acts upstream of the ribosome quality control system (RQC), a ribosome-associated complex that mediates the extraction of incompletely synthesized nascent chains from stalled ribosomes and their subsequent degradation. Probably generates substrates for RQC. This is Endonuclease MutS2 from Geobacillus kaustophilus (strain HTA426).